Reading from the N-terminus, the 111-residue chain is Small ribosomal subunit protein bS16 (111 aa).

The interval 92-111 (MEVKAKNRKARPSKKEDKEA) is disordered.

Belongs to the bacterial ribosomal protein bS16 family.

This chain is Small ribosomal subunit protein bS16, found in Rickettsia massiliae (strain Mtu5).